Consider the following 296-residue polypeptide: 4-diphosphocytidyl-2-C-methyl-D-erythritol kinase (296 aa).

Residue lysine 11 is part of the active site. An ATP-binding site is contributed by 95–105 (PVAAGMAGGSS). Residue aspartate 137 is part of the active site.

The protein belongs to the GHMP kinase family. IspE subfamily.

The catalysed reaction is 4-CDP-2-C-methyl-D-erythritol + ATP = 4-CDP-2-C-methyl-D-erythritol 2-phosphate + ADP + H(+). The protein operates within isoprenoid biosynthesis; isopentenyl diphosphate biosynthesis via DXP pathway; isopentenyl diphosphate from 1-deoxy-D-xylulose 5-phosphate: step 3/6. Its function is as follows. Catalyzes the phosphorylation of the position 2 hydroxy group of 4-diphosphocytidyl-2C-methyl-D-erythritol. The protein is 4-diphosphocytidyl-2-C-methyl-D-erythritol kinase of Clostridioides difficile (strain 630) (Peptoclostridium difficile).